Reading from the N-terminus, the 185-residue chain is Ribosome-recycling factor (185 aa).

Positions 140–168 (KKEQKDGNITEDEQRNLEKQVQKITDDST) are disordered.

Belongs to the RRF family.

The protein resides in the cytoplasm. Its function is as follows. Responsible for the release of ribosomes from messenger RNA at the termination of protein biosynthesis. May increase the efficiency of translation by recycling ribosomes from one round of translation to another. This chain is Ribosome-recycling factor, found in Lactobacillus helveticus (strain DPC 4571).